The sequence spans 225 residues: DNA repair and recombination protein RadB (225 aa).

Belongs to the eukaryotic RecA-like protein family. RadB subfamily.

Functionally, involved in DNA repair and in homologous recombination. May regulate the cleavage reactions of the branch-structured DNA. Has a very weak ATPase activity that is not stimulated by DNA. Binds DNA but does not promote DNA strands exchange. The polypeptide is DNA repair and recombination protein RadB (Methanococcoides burtonii (strain DSM 6242 / NBRC 107633 / OCM 468 / ACE-M)).